We begin with the raw amino-acid sequence, 688 residues long: Soluble guanylate cyclase gcy-35 (688 aa).

Position 105 (His-105) interacts with heme. Residues 358 to 401 are a coiled coil; the sequence is LNQSRMSQVELNRTLEETTKKLKKMAQELEIEKQKTDELLCELM. The region spanning 424-552 is the Guanylate cyclase domain; it reads TLLFTDIVTF…DTVNVANKME (129 aa). 2 residues coordinate Mg(2+): Asp-429 and Asp-473. A disordered region spans residues 644–688; sequence VENGNSAQNNHNNNNNTHHSGRKLMNGSSVDPGSHHIRSPTCTIS. Positions 646–659 are enriched in low complexity; it reads NGNSAQNNHNNNNN.

This sequence belongs to the adenylyl cyclase class-4/guanylyl cyclase family. Heterodimer; heterodimerizes with gcy-36, and possibly with other soluble guanylate cyclases. The cofactor is heme. In terms of tissue distribution, expressed in URX, AQR and PQR neurons. Also expressed in ALN, SDQ and BDU neurons, and variably in AVM, PLM and PLN neurons, pharyngeal and body wall muscles, and the excretory cell.

The protein localises to the cytoplasm. It localises to the cell projection. The protein resides in the dendrite. It catalyses the reaction GTP = 3',5'-cyclic GMP + diphosphate. Its activity is regulated as follows. Regulated by molecular oxygen, which binds to the heme binding site. Probably not activated by nitric oxide (NO). In terms of biological role, plays a central role in social feeding behavior and oxygen sensation by synthesizing 3',5'-cyclic guanosine monophosphate (cGMP) from GTP. Oxygen, which binds to its heme-binding sites, probably regulates social behavior by modulating its activity. cGMP is a common second messenger in sensory transduction and is implicated in oxygen sensation. Indeed, C.elegans exhibits a strong behavioral preference for 5-12% oxygen, avoiding higher and lower oxygen levels; a higher level of oxygen inducing a naturally polymorphic social feeding behavior. Involved in avoidance of hyperoxia and for oxygen-induced aggregation and bordering, probably by mediating oxygen-sensing in URX, AQR and PQR sensory neurons. In Caenorhabditis elegans, this protein is Soluble guanylate cyclase gcy-35 (gcy-35).